We begin with the raw amino-acid sequence, 140 residues long: Lymphocyte antigen 6L (140 aa).

An N-terminal signal peptide occupies residues 1-20 (MAPLLLVLWASLVSMELTGG). The region spanning 31 to 124 (LSCFECFKVL…GSWEGFWSLP (94 aa)) is the UPAR/Ly6 domain. Cystine bridges form between cysteine 33-cysteine 50 and cysteine 105-cysteine 110. Serine 116 carries GPI-anchor amidated serine lipidation. Residues 117–140 (WEGFWSLPGRLLLPMGLGLFCTLL) constitute a propeptide, removed in mature form.

The protein resides in the cell membrane. The chain is Lymphocyte antigen 6L from Mus musculus (Mouse).